A 194-amino-acid chain; its full sequence is Putative manganese efflux pump MntP (194 aa).

The next 6 membrane-spanning stretches (helical) occupy residues 8–28 (LLAI…GIIL), 36–56 (MLIM…LGWL), 61–81 (FSHL…AFLG), 109–129 (MAVA…FLGI), 138–158 (PAGI…IFGI), and 172–192 (LWGG…HLFF).

It belongs to the MntP (TC 9.B.29) family.

It is found in the cell inner membrane. Probably functions as a manganese efflux pump. This Bacteroides fragilis (strain ATCC 25285 / DSM 2151 / CCUG 4856 / JCM 11019 / LMG 10263 / NCTC 9343 / Onslow / VPI 2553 / EN-2) protein is Putative manganese efflux pump MntP.